The sequence spans 346 residues: MSAITGRVSTYHREKFPEWKVKLVNEVKEKLKENDVVLVLDLVETPANLVHKFRKKFRKELPYMKVIKNNLVRKAFEQSGIEMPKEMDEQLVGSNMFIFTNDNPFKLALKISKFSMPAPAKPGDVAQSEIVVPAGDTGLTPGPILSTFGKLKIKTMVKGGTIHIAKDTVVAKPGDVISPELASLLQKLGITPMELKMKIKGAYIKSLNRWVPAEELVLDLNKYKEQIQEAYTNALALGVSIAYPVPEVLKLSVAKAFQDALKVAVEAGWLTKETAPYLLSKAYAQALALVGALGDKAKELGIEVEVPAAPAPEAKEEKKEEAEEEEEEKKEVSEEDLSAGLGALFG.

Positions 305–346 are disordered; that stretch reads EVPAAPAPEAKEEKKEEAEEEEEEKKEVSEEDLSAGLGALFG. Residues 322 to 337 are compositionally biased toward acidic residues; sequence AEEEEEEKKEVSEEDL.

The protein belongs to the universal ribosomal protein uL10 family. Part of the 50S ribosomal subunit. Forms part of the ribosomal stalk which helps the ribosome interact with GTP-bound translation factors. Forms a heptameric L10(L12)2(L12)2(L12)2 complex, where L10 forms an elongated spine to which the L12 dimers bind in a sequential fashion.

Functionally, forms part of the ribosomal stalk, playing a central role in the interaction of the ribosome with GTP-bound translation factors. The protein is Large ribosomal subunit protein uL10 of Ignicoccus hospitalis (strain KIN4/I / DSM 18386 / JCM 14125).